Consider the following 209-residue polypeptide: dITP/XTP pyrophosphatase (209 aa).

A substrate-binding site is contributed by 7–12 (SSHGYK). Catalysis depends on Asp70, which acts as the Proton acceptor. Asp70 provides a ligand contact to Mg(2+). Substrate is bound by residues Ser71, 154–157 (FGYD), Lys177, and 182–183 (HR).

The protein belongs to the HAM1 NTPase family. In terms of assembly, homodimer. The cofactor is Mg(2+).

The enzyme catalyses XTP + H2O = XMP + diphosphate + H(+). It catalyses the reaction dITP + H2O = dIMP + diphosphate + H(+). It carries out the reaction ITP + H2O = IMP + diphosphate + H(+). Its function is as follows. Pyrophosphatase that catalyzes the hydrolysis of nucleoside triphosphates to their monophosphate derivatives, with a high preference for the non-canonical purine nucleotides XTP (xanthosine triphosphate), dITP (deoxyinosine triphosphate) and ITP. Seems to function as a house-cleaning enzyme that removes non-canonical purine nucleotides from the nucleotide pool, thus preventing their incorporation into DNA/RNA and avoiding chromosomal lesions. The chain is dITP/XTP pyrophosphatase from Chlamydia trachomatis serovar A (strain ATCC VR-571B / DSM 19440 / HAR-13).